Consider the following 523-residue polypeptide: Coatomer subunit delta-2 (523 aa).

The tract at residues 218-243 is disordered; the sequence is DSFASKPKGRPSAAATAPGKGLGMKL. The MHD domain maps to 282–523; sequence SDPVTVTIEE…RLVTANYQVV (242 aa).

Belongs to the adaptor complexes medium subunit family. Delta-COP subfamily. Oligomeric complex that consists of at least the alpha, beta, beta', gamma, delta, epsilon and zeta subunits.

It localises to the cytoplasm. The protein localises to the golgi apparatus membrane. The protein resides in the cytoplasmic vesicle. Its subcellular location is the COPI-coated vesicle membrane. Functionally, the coatomer is a cytosolic protein complex that binds to dilysine motifs and reversibly associates with Golgi non-clathrin-coated vesicles, which further mediate biosynthetic protein transport from the ER, via the Golgi up to the trans Golgi network. Coatomer complex is required for budding from Golgi membranes, and is essential for the retrograde Golgi-to-ER transport of dilysine-tagged proteins. The sequence is that of Coatomer subunit delta-2 from Oryza sativa subsp. japonica (Rice).